The chain runs to 185 residues: Large ribosomal subunit protein uL22 (185 aa).

The tract at residues 157 to 185 (VAAPTPDEDAPKKKQSKKKMARQKLMQRD) is disordered. Basic residues predominate over residues 169 to 178 (KKQSKKKMAR).

This sequence belongs to the universal ribosomal protein uL22 family.

This chain is Large ribosomal subunit protein uL22 (RpL17), found in Argas monolakensis (Mono lake bird tick).